Consider the following 824-residue polypeptide: MASPALRHFLPRFGAAAAAASFLSLAGCQLGGNDPETVLPVSGTFPLKGLAQNVSVRRNNMGMPLIESSSYHDALFTLGYVHAGDRISQMLGMRLLAQGRLSEMAGADALDVDRLMRSVNLKQNASDLYNAASPRLKRFFDVYARGVNAYLFRYRDKLPADIASSGYKPEYWKPEDSALIFSLLNFSLSVNLQEELSALVLAQKVSADKLAWLLPTYPDEELPFAEADKLKGLNLNNQVTGLSDLNRIALQLSDLNMLGVAASSNWAIAPQRSRNGKSLLASDMQLPAGLNSAWSFVQIRAPKYQVSGVTIAGMPLVLSGFNGKLAWSMSNVKGDNQDLFLEKIKREGNRVSYMVDGKWLPAAAHQETFLVKGGSPLRETVYETRHGALLNASATPPGNGLSLALQVPNFKDDKSLDAFFDLSRAPNVEKAFDTSREIRAITLNMIFADASNIGWQVTGRFPNRREGQGLLPSPGWDGKYDWDGFADSMLHPYDQDPRQGWLAAANQRTIPKGYGMQLSNSWGYPERAERIAELANGGKQDLRSTIAMQYDQTTTFAAKLKSMFQAPGMSKPLKQAIDALPEADRNKAREAFTRLMAFDGKLSATSADAALYELFLQESAKQIFLDELGPETSPAWQALVANASSSYSPQADHLLGRDDSPYWDDVKTPQKEDKPAILARSLAAAITSGDSLLGSDHKAWQWGKLHRDNWASTSPLAKQLGGGEFNRGATPTGGDHTTLNVSGFEWGKGFDARMAPGLRMIVDFSLVEPMTGLISTGQSGNPASPYYANSIEPWQKGQYQSIPVQQQNYEKGYGKQRLTLTPGK.

The signal sequence occupies residues 1-26; sequence MASPALRHFLPRFGAAAAAASFLSLA. Ser264 acts as the Nucleophile in catalysis.

Belongs to the peptidase S45 family. Heterodimer of an alpha subunit and a beta subunit processed from the same precursor.

The protein resides in the periplasm. It catalyses the reaction an N-acyl-L-homoserine lactone + H2O = L-homoserine lactone + a carboxylate. Catalyzes the deacylation of acyl-homoserine lactone (AHL or acyl-HSL), releasing homoserine lactone (HSL) and the corresponding fatty acid. Possesses a specificity for the degradation of long-chain acyl-HSLs (side chains of seven or more carbons in length). This chain is Acyl-homoserine lactone acylase QuiP (quiP), found in Pseudomonas syringae pv. syringae (strain B728a).